Consider the following 265-residue polypeptide: MRGAFYIAIALLIVRSRTATGNAKSDVSRPYVVATGGESTKATPKRYLRGGLALSATNEERMDATVLSKDAKALATEGEDWLRLSLGPVGHSQTPQLKRKFDSLSAIDESSPSKKLATPDRAFTRRFRAEDPQLPKYSKIHQTFLNIPHMPHKISLTEAVLMYRMVNWKNGSSPTKQKSAEALLRLVERTSADDLERALGPTSVRLASQKKIRDEYFKNLTTMYARVHAFCHANPAECTNESTHSPLERKMKAPPDIVLFPLFNR.

The first 19 residues, 1-19, serve as a signal peptide directing secretion; sequence MRGAFYIAIALLIVRSRTA. The RxLR-dEER signature appears at 46 to 61; sequence RYLRGGLALSATNEER. N-linked (GlcNAc...) asparagine glycans are attached at residues N170, N219, and N240.

The protein belongs to the RxLR effector family. Post-translationally, N-glycosylated. The putative N-glycosylation site at position 240 is essential for cell death-inducing activity.

It localises to the secreted. Its subcellular location is the host nucleus. Effector that acts as an elicitor that induces cell death and promotes ROS accumulation in Nicotian benthamiana. RxLR16-triggered cell death is dependent on SGT1, HSP90 and RAR1, but independent of the somatic embryogenesis receptor-like kinase SERK3/BAK1, indicating that it acts independently of the detection of cell surface pattern recognition receptors. Enhances the expressional levels of defense-associated genes involved in the salicylic acid-, jasmonate acid-, and ethylene-mediated signal transduction, resulting in disease resistance. However, as some other Plasmopara viticola RxLR effectors including RxLR1, RxLR10, RxLR30 and RxLR25, can suppress defense responses and disease resistance induced by RxLR16, it may not trigger host cell death or immune responses during physiological infection under natural conditions. This is Secreted RxLR effector protein 16 from Plasmopara viticola (Downy mildew of grapevine).